We begin with the raw amino-acid sequence, 82 residues long: RNA-binding protein Hfq (82 aa).

Residues 11-71 (DTFLNHVRKT…ISTIMPGAPI (61 aa)) form the Sm domain.

It belongs to the Hfq family. Homohexamer.

Functionally, RNA chaperone that binds small regulatory RNA (sRNAs) and mRNAs to facilitate mRNA translational regulation in response to envelope stress, environmental stress and changes in metabolite concentrations. Also binds with high specificity to tRNAs. This Nitrobacter winogradskyi (strain ATCC 25391 / DSM 10237 / CIP 104748 / NCIMB 11846 / Nb-255) protein is RNA-binding protein Hfq.